Here is a 64-residue protein sequence, read N- to C-terminus: Large ribosomal subunit protein bL28 (64 aa).

The interval 1-23 (MARKDQISHRGPLSGNNRSHALN) is disordered.

The protein belongs to the bacterial ribosomal protein bL28 family.

The chain is Large ribosomal subunit protein bL28 from Mesomycoplasma hyopneumoniae (strain J / ATCC 25934 / NCTC 10110) (Mycoplasma hyopneumoniae).